The primary structure comprises 309 residues: Homoserine kinase (309 aa).

91-101 (PIGSGLGSSAC) lines the ATP pocket.

Belongs to the GHMP kinase family. Homoserine kinase subfamily.

The protein resides in the cytoplasm. The enzyme catalyses L-homoserine + ATP = O-phospho-L-homoserine + ADP + H(+). It participates in amino-acid biosynthesis; L-threonine biosynthesis; L-threonine from L-aspartate: step 4/5. Functionally, catalyzes the ATP-dependent phosphorylation of L-homoserine to L-homoserine phosphate. This chain is Homoserine kinase, found in Pectobacterium carotovorum subsp. carotovorum (strain PC1).